Here is a 394-residue protein sequence, read N- to C-terminus: Putative serine protease HhoA (394 aa).

The first 24 residues, 1 to 24, serve as a signal peptide directing secretion; sequence MKYPTWLRRIGGYLLAFAVGTAFG. A PDZ domain is found at 293 to 377; sequence MMNITVDQAQ…ALKLDLLRGD (85 aa).

This sequence belongs to the peptidase S1C family.

Its subcellular location is the periplasm. Functionally, a putative protease, its function overlaps that of the related putative proteases HhoB and HtrA. The polypeptide is Putative serine protease HhoA (hhoA) (Synechocystis sp. (strain ATCC 27184 / PCC 6803 / Kazusa)).